The following is a 255-amino-acid chain: Hydroxyacylglutathione hydrolase (255 aa).

Residues H56, H58, D60, H61, H112, D129, and H167 each contribute to the Zn(2+) site.

The protein belongs to the metallo-beta-lactamase superfamily. Glyoxalase II family. In terms of assembly, monomer. It depends on Zn(2+) as a cofactor.

It carries out the reaction an S-(2-hydroxyacyl)glutathione + H2O = a 2-hydroxy carboxylate + glutathione + H(+). It participates in secondary metabolite metabolism; methylglyoxal degradation; (R)-lactate from methylglyoxal: step 2/2. Its function is as follows. Thiolesterase that catalyzes the hydrolysis of S-D-lactoyl-glutathione to form glutathione and D-lactic acid. This Pseudomonas fluorescens (strain SBW25) protein is Hydroxyacylglutathione hydrolase.